A 193-amino-acid chain; its full sequence is Protein Syd (193 aa).

The protein belongs to the Syd family.

Its subcellular location is the cell inner membrane. Interacts with the SecY protein in vivo. May bind preferentially to an uncomplexed state of SecY, thus functioning either as a chelating agent for excess SecY in the cell or as a regulatory factor that negatively controls the translocase function. This chain is Protein Syd, found in Tolumonas auensis (strain DSM 9187 / NBRC 110442 / TA 4).